A 532-amino-acid chain; its full sequence is Alkaline phosphatase (532 aa).

The tract at residues M1–S20 is disordered. Residues W27–F47 traverse the membrane as a helical; Signal-anchor for type II membrane protein segment. D68 lines the Mg(2+) pocket. Residue D68 coordinates Zn(2+). Residue S115 is the Phosphoserine intermediate of the active site. Mg(2+) contacts are provided by D166, T168, and E306. Zn(2+) is bound by residues D311, H315, D352, H353, and H456.

The protein belongs to the alkaline phosphatase family. Mg(2+) serves as cofactor. Zn(2+) is required as a cofactor.

The protein localises to the membrane. It carries out the reaction a phosphate monoester + H2O = an alcohol + phosphate. The polypeptide is Alkaline phosphatase (Schizosaccharomyces pombe (strain 972 / ATCC 24843) (Fission yeast)).